The chain runs to 128 residues: MAKHSKSIPGRGLRVADQIQRDLSEIVAFELKDPRVGMITITEVQVTPDYAHAKVFFTMLSDNKDEIKNTVSGLSAASGYIRGQLGRRLSIHTLPELHFVHDTSTARGIEMSKLIDEANATRAKDAED.

The protein belongs to the RbfA family. As to quaternary structure, monomer. Binds 30S ribosomal subunits, but not 50S ribosomal subunits or 70S ribosomes.

The protein resides in the cytoplasm. In terms of biological role, one of several proteins that assist in the late maturation steps of the functional core of the 30S ribosomal subunit. Associates with free 30S ribosomal subunits (but not with 30S subunits that are part of 70S ribosomes or polysomes). Required for efficient processing of 16S rRNA. May interact with the 5'-terminal helix region of 16S rRNA. The chain is Ribosome-binding factor A from Herminiimonas arsenicoxydans.